Consider the following 898-residue polypeptide: MQTHEIRKRFLDHFVKAGHTEVPSASVILDDPNLLFVNAGMVQFVPYFLGQRTPPWDRAASVQKCIRTPDIDEVGITTRHNTFFQMAGNFSFGDYFKKGAIEFAWTLLTNPVEAGGYGFDPERLWATVYLDDDEAIGYWQEVAGLPLERIQRRGMADNYWSMGIPGPCGPSSEIYYDRGPEYGIEGGPEANEDRYIEIWNLVFMQNERGEGTSKEDFEILGPLPRKNIDTGMGVERVACLLQGVDNVYETDLLRPAIDLVAGIAPRGYGQGVHEDDVRYRIIADHSRTAAIIIGDGVSPGNEGRGYVLRRLLRRIIRAAKLLGVDDPIMAELMATVRDAMSPSYPELAADFDRIQRIAVAEETAFNRTLASGSKLFDDAARATKASGAEKLSGRDAFTLHDTYGFPIELTLEMAAEADLSVDEEGFRALMAEQRQRAKADAAARKQAHADLSAYRELVDAGPTEFTGFDELSSEARILGIFVDGKRVPVVAHTGREGAQERVELILDRSPFYAESGGQIADEGTVTGTGASETAKAAVTDVQKIAKTLWAHRINVESGEFVEGDTVVAAVDPRWRHGATQGHSGTHMVHAALRQVLGPNAVQAGSLNRPGYLRFDFNWQGALTDDQRSQIEEVTNQAVEADFEVHSFTTELDKAKAMGAMALFGENYPDEVRVVEIGGPFSLELCGGTHVRSSAQIGPVTILGESSVGSGVRRVEAYVGLDSFRHLAKERALMAGLASSLKVPSEEVPARVATLVEKLRAAEKELDRLRLAGARSAAVNAAAGAEQIGDVRLVAQRMAGGISGADLRSLVGEIRGKLGSDPAVVALIAEGDNDSVPFVVAVNPAAQDRGVRADELVKVMGAAVNGRGGGKADLAQGSGKGAAGIDAALAAIRAEIGRS.

Residues His-582, His-586, Cys-685, and His-689 each coordinate Zn(2+).

Belongs to the class-II aminoacyl-tRNA synthetase family. The cofactor is Zn(2+).

It is found in the cytoplasm. It catalyses the reaction tRNA(Ala) + L-alanine + ATP = L-alanyl-tRNA(Ala) + AMP + diphosphate. In terms of biological role, catalyzes the attachment of alanine to tRNA(Ala) in a two-step reaction: alanine is first activated by ATP to form Ala-AMP and then transferred to the acceptor end of tRNA(Ala). Also edits incorrectly charged Ser-tRNA(Ala) and Gly-tRNA(Ala) via its editing domain. The polypeptide is Alanine--tRNA ligase (Mycolicibacterium vanbaalenii (strain DSM 7251 / JCM 13017 / BCRC 16820 / KCTC 9966 / NRRL B-24157 / PYR-1) (Mycobacterium vanbaalenii)).